Reading from the N-terminus, the 230-residue chain is Large ribosomal subunit protein uL1 (230 aa).

This sequence belongs to the universal ribosomal protein uL1 family. Part of the 50S ribosomal subunit.

Functionally, binds directly to 23S rRNA. The L1 stalk is quite mobile in the ribosome, and is involved in E site tRNA release. Protein L1 is also a translational repressor protein, it controls the translation of the L11 operon by binding to its mRNA. The polypeptide is Large ribosomal subunit protein uL1 (Lactobacillus acidophilus (strain ATCC 700396 / NCK56 / N2 / NCFM)).